The chain runs to 309 residues: Porphobilinogen deaminase (309 aa).

Cys241 carries the S-(dipyrrolylmethanemethyl)cysteine modification.

It belongs to the HMBS family. Monomer. Dipyrromethane serves as cofactor.

It catalyses the reaction 4 porphobilinogen + H2O = hydroxymethylbilane + 4 NH4(+). It functions in the pathway porphyrin-containing compound metabolism; protoporphyrin-IX biosynthesis; coproporphyrinogen-III from 5-aminolevulinate: step 2/4. Functionally, tetrapolymerization of the monopyrrole PBG into the hydroxymethylbilane pre-uroporphyrinogen in several discrete steps. The protein is Porphobilinogen deaminase of Bacillus cereus (strain ZK / E33L).